Consider the following 520-residue polypeptide: Peptide chain release factor 3 (520 aa).

The region spanning 8–277 is the tr-type G domain; the sequence is ESRKTFAIIS…HAPMPNARQT (270 aa). Residues 17-24, 85-89, and 139-142 contribute to the GTP site; these read SHPDAGKT, DTPGH, and NKLD.

Belongs to the TRAFAC class translation factor GTPase superfamily. Classic translation factor GTPase family. PrfC subfamily.

It localises to the cytoplasm. Increases the formation of ribosomal termination complexes and stimulates activities of RF-1 and RF-2. It binds guanine nucleotides and has strong preference for UGA stop codons. It may interact directly with the ribosome. The stimulation of RF-1 and RF-2 is significantly reduced by GTP and GDP, but not by GMP. The chain is Peptide chain release factor 3 from Staphylococcus epidermidis (strain ATCC 35984 / DSM 28319 / BCRC 17069 / CCUG 31568 / BM 3577 / RP62A).